A 534-amino-acid polypeptide reads, in one-letter code: Major facilitator-type transporter sor6 (534 aa).

N-linked (GlcNAc...) asparagine glycans are attached at residues asparagine 29 and asparagine 36. Transmembrane regions (helical) follow at residues 66-86, 103-123, 160-180, 182-202, 209-229, 241-261, 318-338, 354-374, 395-415, 424-444, 456-476, and 486-506; these read WFLT…SSAY, LFIT…AVWG, AMVA…LIVL, FLAG…IADL, GLAM…GPIV, WVQG…VIFV, IVLI…MFLG, FGGL…GYAI, LPPA…FAWT, VSIV…LPIV, ASVL…FPLF, and IHWA…FPFF.

The protein belongs to the major facilitator superfamily. Sugar transporter (TC 2.A.1.1) family.

It localises to the membrane. Major facilitator-type transporter; part of the gene cluster that mediates the biosynthesis of sorbicillinoids, a diverse group of yellow secondary metabolites that restrict growth of competing pathogenic fungi but not of bacteria. This Hypocrea jecorina (strain QM6a) (Trichoderma reesei) protein is Major facilitator-type transporter sor6.